Consider the following 91-residue polypeptide: B3 domain-containing protein Os03g0164300 (91 aa).

Residues 1-91 (MTNAKMTFAV…VLVLKVHVLK (91 aa)) constitute a DNA-binding region (TF-B3).

Its subcellular location is the nucleus. The sequence is that of B3 domain-containing protein Os03g0164300 from Oryza sativa subsp. japonica (Rice).